We begin with the raw amino-acid sequence, 340 residues long: MIFIDACFRKPTPYTPIWLMRQAGRYLSEYKQTRTKAGSFLSLCKNVELATEVTLQPVEILDVDAAILFSDILVVPLEMGLPLEFLAGEGPKFNRTISNVSDVVNLQEGAHKRLTYVYDTLSSIRSKLPKEKALIGFCGSPWTLATYMIEGQGSKTYAKSKAMLYKEPYILKTLLETLSEELKLYLEGQIRAGANAVQIFDSWASALECEVYFEFSWKYMKDIAQYIKGKYPHIPVMLFPKGIAGYLDKIDGCFDVFGVDWGTPMALAKSYLGTKYVLQGNLEPSRLYDKESMERGIDEILKIMGKEKGHIFNLGHGMLPDLPRENAIALVQMVREKSKR.

Substrate-binding positions include 21 to 25 (RQAGR), F40, D71, Y147, S202, and H316.

It belongs to the uroporphyrinogen decarboxylase family. Homodimer.

The protein localises to the cytoplasm. The catalysed reaction is uroporphyrinogen III + 4 H(+) = coproporphyrinogen III + 4 CO2. The protein operates within porphyrin-containing compound metabolism; protoporphyrin-IX biosynthesis; coproporphyrinogen-III from 5-aminolevulinate: step 4/4. In terms of biological role, catalyzes the decarboxylation of four acetate groups of uroporphyrinogen-III to yield coproporphyrinogen-III. This is Uroporphyrinogen decarboxylase from Helicobacter hepaticus (strain ATCC 51449 / 3B1).